The primary structure comprises 187 residues: Meiotically up-regulated gene 155 protein (187 aa).

The disordered stretch occupies residues 1 to 24 (MRPTSGCSKDDTIQKQNRRHNTVD). 2 helical membrane passes run 83-105 (IISYHFISFHTIVVLLLLPPFSH) and 163-183 (VMLTKPKQFLFLLEFITLFIF).

The protein localises to the cytoplasm. It localises to the nucleus membrane. Its function is as follows. Has a role in meiosis. This is Meiotically up-regulated gene 155 protein (mug155) from Schizosaccharomyces pombe (strain 972 / ATCC 24843) (Fission yeast).